The following is a 427-amino-acid chain: UPF0229 protein YeaH (427 aa).

Residues 84–110 are disordered; sequence QSDRIERPQGGGGGSGSGQGQASQDGE. Over residues 92–102 the composition is skewed to gly residues; it reads QGGGGGSGSGQ.

It belongs to the UPF0229 family.

The polypeptide is UPF0229 protein YeaH (Escherichia fergusonii (strain ATCC 35469 / DSM 13698 / CCUG 18766 / IAM 14443 / JCM 21226 / LMG 7866 / NBRC 102419 / NCTC 12128 / CDC 0568-73)).